Consider the following 229-residue polypeptide: MMGATSPSGLELTMAVPGLSSSGSEGAGCNNNNAGGGCNMRDLDINQPASGGEEEEFPMGSVEEDEEERGVGGPHRPKKLRLSKEQSRLLEESFRLNHTLTPKQKEALAIKLKLRPRQVEVWFQNRRARTKLKQTEMECEYLKRCFGSLTEENRRLQREVEELRAMRVAPPTVLSPHTRQPLPASALTMCPRCERITAATGPPAVRPPPSSAAAAAPSPFHPRRPSAAF.

The interval 1-82 is disordered; sequence MMGATSPSGL…GPHRPKKLRL (82 aa). Residues 52-68 are compositionally biased toward acidic residues; the sequence is GEEEEFPMGSVEEDEEE. Positions 75–134 form a DNA-binding region, homeobox; that stretch reads HRPKKLRLSKEQSRLLEESFRLNHTLTPKQKEALAIKLKLRPRQVEVWFQNRRARTKLKQ. A leucine-zipper region spans residues 133–177; it reads KQTEMECEYLKRCFGSLTEENRRLQREVEELRAMRVAPPTVLSPH. The segment at 198–229 is disordered; that stretch reads AATGPPAVRPPPSSAAAAAPSPFHPRRPSAAF.

Belongs to the HD-ZIP homeobox family. Class II subfamily. In terms of assembly, homodimer. May form a heterodimer with HOX1, HOX2 or HOX7. As to expression, expressed in seedlings, roots, leaves, nodes, internodes, flowers and embryo.

The protein resides in the nucleus. Its function is as follows. Probable transcription repressor that binds to the DNA sequence 5'-CAAT[GC]ATTG-3'. This chain is Homeobox-leucine zipper protein HOX3 (HOX3), found in Oryza sativa subsp. indica (Rice).